The chain runs to 556 residues: Arginine--tRNA ligase (556 aa).

The 'HIGH' region motif lies at 132–142; it reads VNPTGDLHLGH.

Belongs to the class-I aminoacyl-tRNA synthetase family. Monomer.

The protein localises to the cytoplasm. The enzyme catalyses tRNA(Arg) + L-arginine + ATP = L-arginyl-tRNA(Arg) + AMP + diphosphate. The protein is Arginine--tRNA ligase of Oceanobacillus iheyensis (strain DSM 14371 / CIP 107618 / JCM 11309 / KCTC 3954 / HTE831).